A 220-amino-acid chain; its full sequence is Probable septum site-determining protein MinC (220 aa).

The protein belongs to the MinC family. As to quaternary structure, interacts with MinD and FtsZ.

Its function is as follows. Cell division inhibitor that blocks the formation of polar Z ring septums. Rapidly oscillates between the poles of the cell to destabilize FtsZ filaments that have formed before they mature into polar Z rings. Prevents FtsZ polymerization. The protein is Probable septum site-determining protein MinC of Vibrio campbellii (strain ATCC BAA-1116).